The sequence spans 773 residues: Preaspterpenacid I synthase sttA (773 aa).

A sesterterpenoid synthase region spans residues 4–359 (ISDVMKHCVP…RYHRTDLATT (356 aa)). Residue D105 coordinates Mg(2+). Residue D105 coordinates substrate. Residues 211-214 (RVNE) are substrate. N255 provides a ligand contact to substrate. Substrate regions lie at residues 259-263 (SFPKE) and 350-351 (RY). Residues 360–769 (AEDRATLIGK…RMMLLGMGPK (410 aa)) are geranylfarnesyl diphosphate synthase. The interval 423-447 (AFKKRNSRNGKQNGTEGSKSTFTNG) is disordered. Residues 431–447 (NGKQNGTEGSKSTFTNG) are compositionally biased toward polar residues. The isopentenyl diphosphate site is built by K493, R496, and H525. The Mg(2+) site is built by D532 and D536. Dimethylallyl diphosphate is bound at residue R541. Isopentenyl diphosphate is bound at residue R542. K614, T615, Q652, N659, and K669 together coordinate dimethylallyl diphosphate.

In the N-terminal section; belongs to the terpene synthase family. It in the C-terminal section; belongs to the FPP/GGPP synthase family.

It carries out the reaction 4 isopentenyl diphosphate + dimethylallyl diphosphate = (2E,6E,10E,14E)-geranylfarnesyl diphosphate + 4 diphosphate. The catalysed reaction is (2E,6E,10E,14E)-geranylfarnesyl diphosphate + H2O = preaspterpenacid acid I + diphosphate. Its pathway is secondary metabolite biosynthesis; terpenoid biosynthesis. Sesterterpenoid synthase; part of the gene cluster that mediates the biosynthesis of aspterpenacids. Performs both prenyl transferase and terpene cyclase activity, converting isopentenyl diphosphate and dimethylallyl diphosphate into geranylfarnesyl diphosphate (GFPP) and then converting GFPP into preaspterpenacid I. C22-oxidative modification of preaspterpenacid I by the cytochrome P450 monooxygenase sttB then leads to preaspterpenacid II. It has still to be determined how preaspterpenacid II is further modified to produce aspterpenacids. This is Preaspterpenacid I synthase sttA from Aspergillus terreus (strain NIH 2624 / FGSC A1156).